The chain runs to 426 residues: Mediator of RNA polymerase II transcription subunit 1 (426 aa).

The tract at residues 319–349 is disordered; the sequence is ISTSNSGSVQPKPRRKSSVLSNRRPSMTDSM. The segment covering 336 to 347 has biased composition (polar residues); sequence SVLSNRRPSMTD.

This sequence belongs to the Mediator complex subunit 1 family. Component of the Mediator complex.

Its subcellular location is the nucleus. Functionally, component of the Mediator complex, a coactivator involved in the regulated transcription of nearly all RNA polymerase II-dependent genes. Mediator functions as a bridge to convey information from gene-specific regulatory proteins to the basal RNA polymerase II transcription machinery. Mediator is recruited to promoters by direct interactions with regulatory proteins and serves as a scaffold for the assembly of a functional preinitiation complex with RNA polymerase II and the general transcription factors. This chain is Mediator of RNA polymerase II transcription subunit 1 (MED1), found in Kluyveromyces lactis (strain ATCC 8585 / CBS 2359 / DSM 70799 / NBRC 1267 / NRRL Y-1140 / WM37) (Yeast).